Consider the following 466-residue polypeptide: Adenosylhomocysteinase (466 aa).

Positions 57, 132, and 192 each coordinate substrate. 193-195 (TTT) is a binding site for NAD(+). Positions 222 and 226 each coordinate substrate. Residues Asn227, 256-261 (GYGDVG), Glu279, Asn314, 335-337 (IGH), and Asn380 each bind NAD(+).

This sequence belongs to the adenosylhomocysteinase family. Requires NAD(+) as cofactor.

It is found in the cytoplasm. The catalysed reaction is S-adenosyl-L-homocysteine + H2O = L-homocysteine + adenosine. The protein operates within amino-acid biosynthesis; L-homocysteine biosynthesis; L-homocysteine from S-adenosyl-L-homocysteine: step 1/1. Its function is as follows. May play a key role in the regulation of the intracellular concentration of adenosylhomocysteine. This Chromobacterium violaceum (strain ATCC 12472 / DSM 30191 / JCM 1249 / CCUG 213 / NBRC 12614 / NCIMB 9131 / NCTC 9757 / MK) protein is Adenosylhomocysteinase.